Consider the following 516-residue polypeptide: MIPLQVDPNVVAQGVNYVWILVVSFLIFFMQPGFALLEAGQVRAKNVGNVLMKNMTDWALGVLVYFVVGAGVATIVGGLTSPGGFDVAAAFSYIGDSGAWIDWLFGAVFAMTAATIVSGAVAERMDFRAYVVFAATITGFIYPVVQGLTWSGGLLSGSGYLGAALGVGYLDFAGATVVHMCGGVAGLVGAKMVGPRKGRFGASGESQPIPGHSMLLAVLGTLILAFGWYGFNVGTQATVLATTESGGLEFMGAALGRVALVTTLGMGAGAVAAMVVSTNYQGKPDPLWMANGLLAGLVAVTGAVPHVTWWGGLVLGALGGAIVLPAYRWTVDSLKIDDVCGVFAVHGVAGAVGTALIPVFAVGGFSATQLVMQVAGVGIIALWTIVASAVVFAAAGTVFGLRVSEEEELEGLDIGEHGVSVYPEFIGESGPDRGVGTRAATDGGNDVRTDGGNDVRTDGGNDVRTDGGNDVRTDGGNDVRTDGGNDVRTDGDVVGDNGVAVTEGNDSAAVDGGENQ.

11 helical membrane-spanning segments follow: residues 17–37 (YVWILVVSFLIFFMQPGFALL), 59–79 (ALGVLVYFVVGAGVATIVGGL), 101–121 (IDWLFGAVFAMTAATIVSGAV), 130–150 (YVVFAATITGFIYPVVQGLTW), 170–190 (LDFAGATVVHMCGGVAGLVGA), 214–234 (MLLAVLGTLILAFGWYGFNVG), 258–278 (VALVTTLGMGAGAVAAMVVST), 286–306 (PLWMANGLLAGLVAVTGAVPH), 307–327 (VTWWGGLVLGALGGAIVLPAY), 342–362 (VFAVHGVAGAVGTALIPVFAV), and 374–394 (VAGVGIIALWTIVASAVVFAA). The interval 426 to 516 (IGESGPDRGV…SAAVDGGENQ (91 aa)) is disordered. The span at 445–491 (NDVRTDGGNDVRTDGGNDVRTDGGNDVRTDGGNDVRTDGGNDVRTDG) shows a compositional bias: basic and acidic residues.

This sequence belongs to the ammonia transporter channel (TC 1.A.11.2) family. Homotrimer. Interacts with both GlnK1 and GlnK2 after ammonium shock. Interaction is rapid, reversible and dependent on nitrogen source.

Its subcellular location is the cell membrane. Its function is as follows. Involved in the uptake of ammonium/ammonia (NH(4)(+)/NH(3)). Transport is electrogenic. The protein is Ammonium transporter Amt1 of Haloferax mediterranei (strain ATCC 33500 / DSM 1411 / JCM 8866 / NBRC 14739 / NCIMB 2177 / R-4) (Halobacterium mediterranei).